The following is a 61-amino-acid chain: Alpha-conotoxin-like Tx1.2 (61 aa).

The signal sequence occupies residues 1–20; that stretch reads MFTVFLLVVLATTVVSFTSG. Residues 21-42 constitute a propeptide that is removed on maturation; that stretch reads RSTFRGRNAAAKASGLVSLTDR. Residues Pro44 and Pro50 each carry the 4-hydroxyproline modification. 2 cysteine pairs are disulfide-bonded: Cys46–Cys52 and Cys47–Cys60. The ser-Xaa-Pro motif, crucial for potent interaction with nAChR stretch occupies residues 48-50; the sequence is SHP.

It belongs to the conotoxin A superfamily. Expressed by the venom duct.

It is found in the secreted. Alpha-conotoxins act on postsynaptic membranes, they bind to the nicotinic acetylcholine receptors (nAChR) and thus inhibit them. This toxin also inhibits high voltage-activated (HVA) calcium channel currents in rat DRG neurons (8% inhibition at 1 uM toxin) probably by activating GABA(B) receptors (GABBR1 and/or GABBR2). The chain is Alpha-conotoxin-like Tx1.2 from Conus textile (Cloth-of-gold cone).